We begin with the raw amino-acid sequence, 232 residues long: Peptidyl-prolyl cis-trans isomerase CYP26-1 (232 aa).

Residues 7–166 (FFDLTVDGKP…KPVVIADCGE (160 aa)) form the PPIase cyclophilin-type domain. N-linked (GlcNAc...) asparagine glycosylation is present at Asn-108. A helical membrane pass occupies residues 212-232 (YYLINIVVACMVLMCFWSWFV).

Belongs to the cyclophilin-type PPIase family. Expressed only in flowers.

The protein localises to the membrane. It carries out the reaction [protein]-peptidylproline (omega=180) = [protein]-peptidylproline (omega=0). In terms of biological role, PPIases accelerate the folding of proteins. It catalyzes the cis-trans isomerization of proline imidic peptide bonds in oligopeptides. The protein is Peptidyl-prolyl cis-trans isomerase CYP26-1 (CYP26-1) of Arabidopsis thaliana (Mouse-ear cress).